A 691-amino-acid chain; its full sequence is Lacticin-481/lactococcin-DR transport/processing ATP-binding protein lcnDR3 (691 aa).

The Peptidase C39 domain maps to 6 to 130 (QNNEQDCLLA…KKFSGYIITL (125 aa)). Residue Cys12 is part of the active site. The 277-residue stretch at 158–434 (TFLYIFSLFI…IQDVMFEISR (277 aa)) folds into the ABC transmembrane type-1 domain. The next 5 membrane-spanning stretches (helical) occupy residues 159–179 (FLYI…SIIL), 189–209 (ITYS…SLLM), 262–284 (GILL…IIYL), 289–311 (FTLT…SLIS), and 385–405 (ICVI…LVSI). The ABC transporter domain maps to 464–689 (IILKDISYSY…LLNDSYNSFV (226 aa)). 497–504 (GKSGSGKS) is an ATP binding site.

This sequence belongs to the ABC transporter superfamily.

The protein localises to the cell membrane. Probably implicated in the export process of the lantibiotic lacticin-481/lactococcin-DR. This Lactococcus lactis subsp. lactis (Streptococcus lactis) protein is Lacticin-481/lactococcin-DR transport/processing ATP-binding protein lcnDR3 (lcnDR3).